The primary structure comprises 325 residues: Glutarate 2-hydroxylase (325 aa).

Fe cation contacts are provided by His160, Asp162, and His292.

It belongs to the glutarate hydroxylase family. Homotetramer. Fe(2+) is required as a cofactor.

The enzyme catalyses glutarate + 2-oxoglutarate + O2 = (S)-2-hydroxyglutarate + succinate + CO2. It participates in amino-acid degradation. Functionally, acts as an alpha-ketoglutarate-dependent dioxygenase catalyzing hydroxylation of glutarate (GA) to L-2-hydroxyglutarate (L2HG). Functions in a L-lysine degradation pathway that proceeds via cadaverine, glutarate and L-2-hydroxyglutarate. The sequence is that of Glutarate 2-hydroxylase from Pseudomonas putida (strain ATCC 700007 / DSM 6899 / JCM 31910 / BCRC 17059 / LMG 24140 / F1).